We begin with the raw amino-acid sequence, 352 residues long: C-X-C chemokine receptor type 4 (352 aa).

Positions 1 to 21 (MEGISIYTSDNYTEEMGSGDY) are important for chemokine binding and signaling. The Extracellular segment spans residues 1-38 (MEGISIYTSDNYTEEMGSGDYDSMKEPCFREENANFNK). Y7 carries the post-translational modification Sulfotyrosine. N-linked (GlcNAc...) asparagine glycosylation occurs at N11. At Y12 the chain carries Sulfotyrosine. O-linked (Xyl...) (chondroitin sulfate) serine glycosylation is present at S18. Y21 is subject to Sulfotyrosine. Intrachain disulfides connect C28–C274 and C109–C186. A helical membrane pass occupies residues 39–63 (IFLPTIYSIIFLTGIVGNGLVILVM). Residues 64–77 (GYQKKLRSMTDKYR) lie on the Cytoplasmic side of the membrane. A helical transmembrane segment spans residues 78 to 99 (LHLSVADLLFVITLPFWAVDAV). Residues 94 to 97 (WAVD) form a chemokine binding region. At 100–110 (ANWYFGNFLCK) the chain is on the extracellular side. The helical transmembrane segment at 111–130 (AVHVIYTVNLYSSVLILAFI) threads the bilayer. Positions 113–117 (HVIYT) are chemokine binding. The Cytoplasmic segment spans residues 131–154 (SLDRYLAIVHATNSQRPRKLLAEK). The short motif at 133–135 (DRY) is the Important for signaling element. An involved in dimerization; when bound to chemokine region spans residues 135-147 (YLAIVHATNSQRP). A helical transmembrane segment spans residues 155–174 (VVYVGVWIPALLLTIPDFIF). Over 175–195 (ANVSEADDRYICDRFYPNDLW) the chain is Extracellular. The interval 186–190 (CDRFY) is chemokine binding, important for signaling. The segment at 191-210 (PNDLWVVVFQFQHIMVGLIL) is involved in dimerization. Residues 196–216 (VVVFQFQHIMVGLILPGIVIL) form a helical membrane-spanning segment. At 217–241 (SCYCIIISKLSHSKGHQKRKALKTT) the chain is on the cytoplasmic side. A helical membrane pass occupies residues 242–261 (VILILAFFACWLPYYIGISI). The Extracellular portion of the chain corresponds to 262-282 (DSFILLEIIKQGCEFENTVHK). Residues 266 to 268 (LLE) are involved in dimerization. A helical transmembrane segment spans residues 283–302 (WISITEALAFFHCCLNPILY). The Cytoplasmic segment spans residues 303–352 (AFLGAKFKTSAQHALTSVSRGSSLKILSKGKRGGHSSVSTESESSSFHSS). Residues S319 and S321 each carry the phosphoserine modification. S324 and S325 each carry phosphoserine; by PKC and GRK6. A disordered region spans residues 329–352 (LSKGKRGGHSSVSTESESSSFHSS). S330 is modified (phosphoserine; by GRK6). A Glycyl lysine isopeptide (Lys-Gly) (interchain with G-Cter in ubiquitin) cross-link involves residue K331. The segment covering 337 to 352 (HSSVSTESESSSFHSS) has biased composition (low complexity). Position 339 is a phosphoserine; by GRK6 (S339). Residues S348 and S351 each carry the phosphoserine modification.

It belongs to the G-protein coupled receptor 1 family. In terms of assembly, monomer. Can form homodimers. Interacts with CD164. Interacts with ARRB2; the interaction is dependent on the C-terminal phosphorylation of CXCR4 and allows activation of MAPK1 and MAPK3. Interacts with ARR3; the interaction is dependent on the C-terminal phosphorylation of CXCR4 and modulates calcium mobilization. Interacts with RNF113A; the interaction, enhanced by CXCL12, promotes CXCR4 ubiquitination and subsequent degradation. Interacts (via the cytoplasmic C-terminal) with ITCH (via the WW domains I and II); the interaction, enhanced by CXCL12, promotes CXCR4 ubiquitination and leads to its degradation. Interacts with extracellular ubiquitin. Interacts with DBN1; this interaction is enhanced by antigenic stimulation. Following LPS binding, may form a complex with GDF5, HSP90AA1 and HSPA8. Post-translationally, phosphorylated on agonist stimulation. Rapidly phosphorylated on serine and threonine residues in the C-terminal. Phosphorylation at Ser-324 and Ser-325 leads to recruitment of ITCH, ubiquitination and protein degradation. In terms of processing, ubiquitinated after ligand binding, leading to its degradation. Ubiquitinated by ITCH at the cell membrane on agonist stimulation. The ubiquitin-dependent mechanism, endosomal sorting complex required for transport (ESCRT), then targets CXCR4 for lysosomal degradation. This process is dependent also on prior Ser-/Thr-phosphorylation in the C-terminal of CXCR4. Also binding of ARRB1 to STAM negatively regulates CXCR4 sorting to lysosomes though modulating ubiquitination of SFR5S. Sulfation is required for efficient binding of CXCL12/SDF-1alpha and promotes its dimerization. Post-translationally, O- and N-glycosylated. N-glycosylation can mask coreceptor function. The O-glycosylation chondroitin sulfate attachment does not affect interaction with CXCL12/SDF-1alpha nor its coreceptor activity.

It is found in the cell membrane. The protein resides in the cell junction. It localises to the early endosome. Its subcellular location is the late endosome. The protein localises to the lysosome. Receptor for the C-X-C chemokine CXCL12/SDF-1 that transduces a signal by increasing intracellular calcium ion levels and enhancing MAPK1/MAPK3 activation. Involved in the AKT signaling cascade. Plays a role in regulation of cell migration, e.g. during wound healing. Acts as a receptor for extracellular ubiquitin; leading to enhanced intracellular calcium ions and reduced cellular cAMP levels. Binds bacterial lipopolysaccharide (LPS) et mediates LPS-induced inflammatory response, including TNF secretion by monocytes. Involved in hematopoiesis and in cardiac ventricular septum formation. Also plays an essential role in vascularization of the gastrointestinal tract, probably by regulating vascular branching and/or remodeling processes in endothelial cells. Involved in cerebellar development. In the CNS, could mediate hippocampal-neuron survival. The protein is C-X-C chemokine receptor type 4 (CXCR4) of Pan troglodytes (Chimpanzee).